A 110-amino-acid chain; its full sequence is Snake venom vascular endothelial growth factor toxin ICPP (110 aa).

Gln-1 is modified (pyrrolidone carboxylic acid). 3 disulfide bridges follow: Cys-14–Cys-56, Cys-45–Cys-91, and Cys-49–Cys-93.

As to quaternary structure, homodimer; disulfide-linked. Interacts with high affinity with KDR/VEGFR-2, and with a lower affinity with neuropilin-1 (NRP1) and neuropilin-2 (NRP2). Expressed by the venom gland.

Its subcellular location is the secreted. In terms of biological role, snake venom VEGFs may contribute to venom dispersion and prey subjugation by inducing vascular permeability and hypotension. This protein increases vascular permeability and angiogenesis probably through VEGF receptor (KDR/VEGFR-2) signaling. Induces DNA synthesis in human umbilical vein endothelial cells, and promotes mouse embryonic stem cell proliferation and differentiation. It may also induce a drastic hypotensive effect after intravenous injection. The hypotension is mediated by nitric oxide (NO), which is produced by VEGF-activated endothelium NO synthase. The sequence is that of Snake venom vascular endothelial growth factor toxin ICPP from Macrovipera lebetinus (Levantine viper).